Reading from the N-terminus, the 65-residue chain is Large ribosomal subunit protein bL35 (65 aa).

This sequence belongs to the bacterial ribosomal protein bL35 family.

The chain is Large ribosomal subunit protein bL35 from Laribacter hongkongensis (strain HLHK9).